The following is a 348-amino-acid chain: Phosphoribosylformylglycinamidine cyclo-ligase (348 aa).

It belongs to the AIR synthase family.

It localises to the cytoplasm. It carries out the reaction 2-formamido-N(1)-(5-O-phospho-beta-D-ribosyl)acetamidine + ATP = 5-amino-1-(5-phospho-beta-D-ribosyl)imidazole + ADP + phosphate + H(+). The protein operates within purine metabolism; IMP biosynthesis via de novo pathway; 5-amino-1-(5-phospho-D-ribosyl)imidazole from N(2)-formyl-N(1)-(5-phospho-D-ribosyl)glycinamide: step 2/2. The sequence is that of Phosphoribosylformylglycinamidine cyclo-ligase from Citrifermentans bemidjiense (strain ATCC BAA-1014 / DSM 16622 / JCM 12645 / Bem) (Geobacter bemidjiensis).